A 930-amino-acid chain; its full sequence is MDYSKTLNLPTTEFPMRANLPQREPEIGRFWDEIEVYQLVQAKNAGRPKFILHDGPPYANGHIHLGTSLNKILKDIVVKFKSMDGYNAPYVPGWDTHGLPIEQQAIKQLKIKRSALSPVEFRRMCREYALKFVDIQRAEFKRLGVRGEWHNPYLTLQPHFETRQIEVFGEMAKRGYIYKGLKSVYWCADCETALAEAEVEYAEKESPSIHVAFPVVNGRGLLPDQDAAIVIWTTTPWTIPSNVAICVHPEYAYVLLRSGGRAYLVARDLAGNFRELLGDPGAGVEREYRGEELEGVVCRHPFVERDSVVVLADYVTLEQGTGCVHIAPGHGEEDFALGQRYNLPVISPINGKGYFTAEAGNLDGIFYLDANPVVVRELEARGALVGYSRMRHQYPHCWRCKHPVFYRATEQWFASIDGFRRHLLEAIDRVQWIPGWGRDRIRGMVAGRGDWCISRQRVWGVPIPIFYCGDCGRAVITDETISHLKGLFAEHGSDVWYAWEAAELVPPGLVCPHCRGRGDFTKELDTMDVWFDSGSSHWAVLTQPDYWPDLQWPADMYLEGSDQHRGWFNSSLTTAVAVTGEPPYRAVLTHGFVVDEQGRKMSKSLGNVIEPMEVLKELGADILRLWVCSADYRGDLAVSPGILKQMSEAYRKIRNTFRFLLGNLQDFDPDRDTVAYTELTELDRYALLKLHRVTDRVLRAYREYEFHQVYHTLYNYCVTDLSAFYLNVIKDRLYCEPARSVNRRGAQTVLYAVLDSLVRLLVPVLAYTTEEVWGHFPANGKKPPSVQLLEMPEPNPEYLDDELERRWERLLAVRQDVLRALEAARQEKLIRDALEAEAVLYAEPELLEFLRENTVQLPVIFVTSSVRVLPAAEAGGEEAVSGTVAGLKVAVRRAPGTKCVRCWTYGETGVDPEHPEICPRCATVLSGLNL.

Residues 57-67 (PYANGHIHLGT) carry the 'HIGH' region motif. Glu-559 contributes to the L-isoleucyl-5'-AMP binding site. A 'KMSKS' region motif is present at residues 600–604 (KMSKS). Lys-603 is a binding site for ATP. 4 residues coordinate Zn(2+): Cys-899, Cys-902, Cys-918, and Cys-921.

Belongs to the class-I aminoacyl-tRNA synthetase family. IleS type 1 subfamily. Monomer. Zn(2+) serves as cofactor.

Its subcellular location is the cytoplasm. The catalysed reaction is tRNA(Ile) + L-isoleucine + ATP = L-isoleucyl-tRNA(Ile) + AMP + diphosphate. Its function is as follows. Catalyzes the attachment of isoleucine to tRNA(Ile). As IleRS can inadvertently accommodate and process structurally similar amino acids such as valine, to avoid such errors it has two additional distinct tRNA(Ile)-dependent editing activities. One activity is designated as 'pretransfer' editing and involves the hydrolysis of activated Val-AMP. The other activity is designated 'posttransfer' editing and involves deacylation of mischarged Val-tRNA(Ile). The chain is Isoleucine--tRNA ligase from Desulforudis audaxviator (strain MP104C).